The following is a 132-amino-acid chain: Ribonuclease P protein component (132 aa).

The protein belongs to the RnpA family. As to quaternary structure, consists of a catalytic RNA component (M1 or rnpB) and a protein subunit.

It catalyses the reaction Endonucleolytic cleavage of RNA, removing 5'-extranucleotides from tRNA precursor.. Its function is as follows. RNaseP catalyzes the removal of the 5'-leader sequence from pre-tRNA to produce the mature 5'-terminus. It can also cleave other RNA substrates such as 4.5S RNA. The protein component plays an auxiliary but essential role in vivo by binding to the 5'-leader sequence and broadening the substrate specificity of the ribozyme. This Marinomonas sp. (strain MWYL1) protein is Ribonuclease P protein component.